Reading from the N-terminus, the 121-residue chain is UPF0231 protein ESA_03214 (121 aa).

It belongs to the UPF0231 family.

This Cronobacter sakazakii (strain ATCC BAA-894) (Enterobacter sakazakii) protein is UPF0231 protein ESA_03214.